We begin with the raw amino-acid sequence, 1426 residues long: MKDLLNLFKQPGAQLEDFDAIRIGLASPEMIRSWSYGEVKKPETINYRTFKPERDGLFCAKIFGPVKDYECLCGKYKRLKHRGVVCEKCGVEVTIAKVRRERMGHIDLASPVAHIWFLKSLPSRIGLLLDMTLRDIERILYFEAFVVIEPGMTPLERGQLLSDEAYLDAIEQHGDEFEAKMGAEAVLDLLKSLDMTGEARTLREEIEGTNSESKIKRLSKRLKLIEAFLESGNKPEWMIMDVLPVLPPDLRPLVPLDGGRFATSDLNDLYRRVINRNNRLKRLLELSAPDIIVRNEKRMLQESVDALLDNGRRGRAITGTNKRPLKSLADMIKGKQGRFRQNLLGKRVDYSGRSVIVVGPTLRLHQCGLPKRMALELFKPFIFSKLQLRGLATTIKAAKKMVERETGEVWDILSEVIREHPVMLNRAPTLHRLGIQAFEPVLIEGKAIQLHPLVCTAFNADFDGDQMAVHVPLSLEAQLEARALMMSTNNILSPASGEPIIVPSQDVVLGLYYMTRERLDAKGRGMVFTDVQEVHRAHQNGVLDLGARVQVRIREAVFDENGGMNERVHRVETVAGRALLYEIVPDGLPFELVDRDMTKKAISGLVNACYRRVGLKGTVVFADQLMYMGFSMSTGAGVSIGVNDMEVPAEKEKILADAEEEVKDIEEQYASGLVTNGERYNKVVDIWSHTNEAVAKAMMEKMGKDLVEVDGEQKEQKSFNSIFMMADSGARGSAAQIRQLAGMRGLMAKPDGSIIETPITANFREGLNVLQYFISTHGARKGLADTALKTANSGYLTRRLVDVSQDLVVTEEDCGTTEGLHMTPIIEGGDVVETLADRVLGRVVAEDVYKPGTDEVVAAAGTLLDEEWVEHLEQQGVDEIRVRSPITCQTRHGVCAQCYGRDLARGHGVNVGEAVGVIAAQSIGEPGTQLTMRTFHIGGAASRAASINNVQVRNSGSVRLHNVKVVKHHSGNYVAVSRSGEVTVMDDHGRERERYKIPYGAVLSVADGDAVESGQIVANWDPHTHPIITEVEGRVRFYDFVEGVTVAREVDEVTGLSSLVVTDPKSRGNGEHRRMVTDASGKQVEERVAYKDLRPMIKLVDEDGNDLNIAGTDIPAHYFLPAEAIISLEDGAEVRVGDALARIPQESSKTRDITGGLPRVADLFEARKPKEPAILAEVSGTVGFGKDTKGKQRLVITKADGETYEELIPKWRTVTVFEGEHVEKGEVIADGEPNPHDILRLLGVTALAAYVVKEIQDVYRLQGVKINDKHIEVICRQMLRKVGVKDPGESHFLRGEQVDRARVLEANDALEAADKTPATFEPLLLGITKASLATESFISAASFQETTRVLTEAATRGARDDLRGLKENVIVGRLIPAGTGFAYHEERRRAQADPIAAAESAIGLGGGEQPATSETGAGGSDPSEEG.

4 residues coordinate Zn(2+): C71, C73, C86, and C89. Positions 461, 463, and 465 each coordinate Mg(2+). Zn(2+) is bound by residues C814, C888, C895, and C898. The disordered stretch occupies residues 1392-1426; the sequence is ADPIAAAESAIGLGGGEQPATSETGAGGSDPSEEG.

It belongs to the RNA polymerase beta' chain family. As to quaternary structure, the RNAP catalytic core consists of 2 alpha, 1 beta, 1 beta' and 1 omega subunit. When a sigma factor is associated with the core the holoenzyme is formed, which can initiate transcription. The cofactor is Mg(2+). Zn(2+) is required as a cofactor.

It carries out the reaction RNA(n) + a ribonucleoside 5'-triphosphate = RNA(n+1) + diphosphate. Its function is as follows. DNA-dependent RNA polymerase catalyzes the transcription of DNA into RNA using the four ribonucleoside triphosphates as substrates. The chain is DNA-directed RNA polymerase subunit beta' from Alkalilimnicola ehrlichii (strain ATCC BAA-1101 / DSM 17681 / MLHE-1).